A 162-amino-acid polypeptide reads, in one-letter code: Cyclic pyranopterin monophosphate synthase (162 aa).

Residues 75–77 (LCH) and 113–114 (ME) each bind substrate. Aspartate 128 is an active-site residue.

The protein belongs to the MoaC family. Homohexamer; trimer of dimers.

It catalyses the reaction (8S)-3',8-cyclo-7,8-dihydroguanosine 5'-triphosphate = cyclic pyranopterin phosphate + diphosphate. It participates in cofactor biosynthesis; molybdopterin biosynthesis. Functionally, catalyzes the conversion of (8S)-3',8-cyclo-7,8-dihydroguanosine 5'-triphosphate to cyclic pyranopterin monophosphate (cPMP). The chain is Cyclic pyranopterin monophosphate synthase from Burkholderia cenocepacia (strain ATCC BAA-245 / DSM 16553 / LMG 16656 / NCTC 13227 / J2315 / CF5610) (Burkholderia cepacia (strain J2315)).